Reading from the N-terminus, the 373-residue chain is D-alanine--D-alanine ligase (373 aa).

Residues 156 to 363 (KKLLAADGLP…YPTLLATMIE (208 aa)) form the ATP-grasp domain. 184–239 (CERLGLPVFVKPARGGSSIGVSRVSSWDQLPAAVARARRHDPKVIVEAAISGRELE) serves as a coordination point for ATP. Residues Asp318, Glu330, and Asn332 each contribute to the Mg(2+) site.

It belongs to the D-alanine--D-alanine ligase family. The cofactor is Mg(2+). It depends on Mn(2+) as a cofactor.

Its subcellular location is the cytoplasm. The catalysed reaction is 2 D-alanine + ATP = D-alanyl-D-alanine + ADP + phosphate + H(+). It participates in cell wall biogenesis; peptidoglycan biosynthesis. Functionally, cell wall formation. The sequence is that of D-alanine--D-alanine ligase from Mycobacterium tuberculosis (strain ATCC 25177 / H37Ra).